A 336-amino-acid polypeptide reads, in one-letter code: Ornithine carbamoyltransferase, catabolic (336 aa).

Residues 62–65, Gln89, Arg113, and 140–143 each bind carbamoyl phosphate; these read STRT and HPTQ. Residues Asn172, Asp236, and 240–241 each bind L-ornithine; that span reads SM. Residues 277 to 278 and Arg322 contribute to the carbamoyl phosphate site; that span reads CL.

The protein belongs to the aspartate/ornithine carbamoyltransferase superfamily. OTCase family.

It is found in the cytoplasm. The catalysed reaction is carbamoyl phosphate + L-ornithine = L-citrulline + phosphate + H(+). The protein operates within amino-acid degradation; L-arginine degradation via ADI pathway; carbamoyl phosphate from L-arginine: step 2/2. Reversibly catalyzes the transfer of the carbamoyl group from carbamoyl phosphate (CP) to the N(epsilon) atom of ornithine (ORN) to produce L-citrulline. The polypeptide is Ornithine carbamoyltransferase, catabolic (Staphylococcus aureus (strain MSSA476)).